The sequence spans 158 residues: GTP-dependent dephospho-CoA kinase (158 aa).

GTP-binding residues include aspartate 35, valine 36, aspartate 54, lysine 56, glutamate 109, and aspartate 132.

The protein belongs to the GTP-dependent DPCK family.

It carries out the reaction 3'-dephospho-CoA + GTP = GDP + CoA + H(+). It participates in cofactor biosynthesis; coenzyme A biosynthesis. In terms of biological role, catalyzes the GTP-dependent phosphorylation of the 3'-hydroxyl group of dephosphocoenzyme A to form coenzyme A (CoA). This chain is GTP-dependent dephospho-CoA kinase, found in Methanococcus vannielii (strain ATCC 35089 / DSM 1224 / JCM 13029 / OCM 148 / SB).